The primary structure comprises 724 residues: Semaphorin-2A (724 aa).

The signal sequence occupies residues Met1–Ala25. The Sema domain occupies Gln45–Leu522. A glycan (N-linked (GlcNAc...) asparagine) is linked at Asn95. Cys118 and Cys129 are joined by a disulfide. Asn163, Asn190, Asn229, and Asn314 each carry an N-linked (GlcNAc...) asparagine glycan. Intrachain disulfides connect Cys291-Cys399 and Cys315-Cys358. Asn401 is a glycosylation site (N-linked (GlcNAc...) asparagine). Intrachain disulfides connect Cys525–Cys541 and Cys535–Cys550. One can recognise an Ig-like C2-type domain in the interval Pro552 to Ala663. A glycan (N-linked (GlcNAc...) asparagine) is linked at Asn563. The cysteines at positions 590 and 647 are disulfide-linked. Asn658, Asn670, and Asn708 each carry an N-linked (GlcNAc...) asparagine glycan.

The protein belongs to the semaphorin family. In terms of assembly, interacts with PlexB. As to expression, transiently expressed by a single large muscle during motoneuron outgrowth and synapse formation.

It localises to the secreted. Ligand for transmembrane receptor PlexB. Plays a role in growth cone guidance. Required for both proper adult behavior and survival. Can function as a selective target-derived signal that inhibits the formation of specific synaptic terminal arbors. Function in neurons is essential for adult survival, motor neuron survival, and is important for climbing behavior and activity. During embryogenesis, plays an important role in correct salivary gland positioning. The polypeptide is Semaphorin-2A (Drosophila melanogaster (Fruit fly)).